A 677-amino-acid polypeptide reads, in one-letter code: Methionine--tRNA ligase (677 aa).

A 'HIGH' region motif is present at residues 15–25 (PYANGSIHLGH). The Zn(2+) site is built by Cys146, Cys149, Cys159, and Cys162. The 'KMSKS' region motif lies at 333 to 337 (KMSKS). Lys336 provides a ligand contact to ATP. In terms of domain architecture, tRNA-binding spans 575 to 677 (DFAKVDLRVA…AGAKPGHQVK (103 aa)).

The protein belongs to the class-I aminoacyl-tRNA synthetase family. MetG type 1 subfamily. In terms of assembly, homodimer. Zn(2+) is required as a cofactor.

The protein resides in the cytoplasm. It carries out the reaction tRNA(Met) + L-methionine + ATP = L-methionyl-tRNA(Met) + AMP + diphosphate. Its function is as follows. Is required not only for elongation of protein synthesis but also for the initiation of all mRNA translation through initiator tRNA(fMet) aminoacylation. This Escherichia coli (strain SE11) protein is Methionine--tRNA ligase.